A 441-amino-acid chain; its full sequence is MIMSTIFALCTPWGKSGVAVIRVSGKDAAKAFLHFGISSSIKPRTATFAHLYNSKGEIIDEVIIVYFVAPSSFTGEDVVEFHTHGSLAVIKMILAELGKIFVPAGPGEFSLRAFLNNKVDLTRAEAIVDLINSETEMQAKQAIRQMSGALEKLYQSWRQQLIDILSNIEAYIDFPEEVNSAALANIGYLLNNLQESLECHLNDDRKGERLRQGIYIAIVGEPNSGKSTLFNHLAKRDIAIVSEYAGTTRDTLEAHIDVAGYPIVIIDTAGIRDSADLIEQEGIRRAKLKAENADFKIVMLPYEKRNVFNNEIMNLIDEKSICVLSKADNITEHELISIFNFSFVPISVCCNRGIEILLNLIKQRVEKDFQFCSTHPFITSERQRLHIQNTLNIVKNMDLELPMEIVAEDLRLSVRELGKVVGVISDEDILDNVFGKFCIGK.

Residues R22, E80, and K118 each coordinate (6S)-5-formyl-5,6,7,8-tetrahydrofolate. Residues 213–366 (GIYIAIVGEP…LLNLIKQRVE (154 aa)) enclose the TrmE-type G domain. Residues 223-228 (NSGKST), 242-248 (SEYAGTT), and 267-270 (DTAG) contribute to the GTP site. Positions 227 and 248 each coordinate Mg(2+). K441 serves as a coordination point for (6S)-5-formyl-5,6,7,8-tetrahydrofolate.

Belongs to the TRAFAC class TrmE-Era-EngA-EngB-Septin-like GTPase superfamily. TrmE GTPase family. Homodimer. Heterotetramer of two MnmE and two MnmG subunits. Requires K(+) as cofactor.

The protein resides in the cytoplasm. In terms of biological role, exhibits a very high intrinsic GTPase hydrolysis rate. Involved in the addition of a carboxymethylaminomethyl (cmnm) group at the wobble position (U34) of certain tRNAs, forming tRNA-cmnm(5)s(2)U34. In Ehrlichia canis (strain Jake), this protein is tRNA modification GTPase MnmE.